A 1429-amino-acid polypeptide reads, in one-letter code: DNA-directed RNA polymerase subunit beta' (1429 aa).

Zn(2+) is bound by residues Cys-68, Cys-70, Cys-83, and Cys-86. Mg(2+) is bound by residues Asp-459, Asp-461, and Asp-463. Residues Cys-805, Cys-879, Cys-886, and Cys-889 each contribute to the Zn(2+) site. The tract at residues 1407–1429 is disordered; that stretch reads ESFPLLGGDGEPASTTSSTTEGE. Over residues 1419–1429 the composition is skewed to polar residues; it reads ASTTSSTTEGE.

It belongs to the RNA polymerase beta' chain family. In terms of assembly, the RNAP catalytic core consists of 2 alpha, 1 beta, 1 beta' and 1 omega subunit. When a sigma factor is associated with the core the holoenzyme is formed, which can initiate transcription. Requires Mg(2+) as cofactor. Zn(2+) is required as a cofactor.

The enzyme catalyses RNA(n) + a ribonucleoside 5'-triphosphate = RNA(n+1) + diphosphate. Its function is as follows. DNA-dependent RNA polymerase catalyzes the transcription of DNA into RNA using the four ribonucleoside triphosphates as substrates. The polypeptide is DNA-directed RNA polymerase subunit beta' (Rhodopirellula baltica (strain DSM 10527 / NCIMB 13988 / SH1)).